The sequence spans 504 residues: MQQSTPYLSFRGIGKTFPGVKALTDISFDCYAGQVHALMGENGAGKSTLLKILSGNYAPTTGSVVINGQEMSFSDTTAALNAGVAIIYQELHLVPEMTVAENIYLGQLPHKGGIVNRSLLNYEAGLQLKHLGMDIDPDTPLKYLAIGQWQMVEIAKALARNAKIIAFDEPTSSLSAREIGNLFRVIRELRKEGRVILYVSHRMEEIFALSDAITVFKDGRYVKTFTDMQQVDHDALVQAMVGRDIGDIYGWQPRSYGEERLRLDAVKALGVRTPISLAVRSGEIVGLFGLVGAGRSELMKGLFGGTQITAGQVYIDQQPIDIRKPSHAIAAGMMLCPEARKAEGIIPVHSVRDNINISARRKHVLGGCVINNSWEENNADQHIRSLNIKTPGAEQLIMNLSGGNQQKAILGRWLSEEMKVILLDEPTRGIDVGAKHEIYNVIYALAAQGVAVLFASSDLPEVLGVADRIVVMREGEIAGELLHEQADERQALSLAMPKVSQAVA.

2 ABC transporter domains span residues 8–243 (LSFR…MVGR) and 256–499 (YGEE…MPKV). 40–47 (GENGAGKS) provides a ligand contact to ATP.

This sequence belongs to the ABC transporter superfamily. Arabinose importer (TC 3.A.1.2.2) family. In terms of assembly, the complex is composed of two ATP-binding proteins (AraG), two transmembrane proteins (AraH) and a solute-binding protein (AraF).

The protein localises to the cell inner membrane. It catalyses the reaction L-arabinose(out) + ATP + H2O = L-arabinose(in) + ADP + phosphate + H(+). Its function is as follows. Part of the ABC transporter complex AraFGH involved in arabinose import. Responsible for energy coupling to the transport system. The protein is Arabinose import ATP-binding protein AraG of Shigella flexneri.